The sequence spans 215 residues: Glutathione S-transferase stcT (215 aa).

The GST N-terminal domain occupies 2 to 82; that stretch reads PFGTLYTRPF…YDSNTTLLGT (81 aa). Glutathione contacts are provided by Lys52 and Glu66. Lys52 serves as a coordination point for substrate. In terms of domain architecture, GST C-terminal spans 83–211; the sequence is TGQEYASIIR…PVLAEYEMPI (129 aa).

This sequence belongs to the GST superfamily. Glutathione serves as cofactor.

Its pathway is mycotoxin biosynthesis; sterigmatocystin biosynthesis. Glutathione S-transferase; part of the gene cluster that mediates the biosynthesis of sterigmatocystin (ST), a polyketide-derived furanocoumarin which is part of the most toxic and carcinogenic compounds among the known mycotoxins. The first step in the biosynthesis of sterigmatocystin is the production of hexanoate by the fatty acid synthase (FAS) units stcJ and stcK. The polyketide backbone is assembled by the non-reducing polyketide synthase stcA by condensation of the starter hexanoyl-CoA and 7 malonyl-CoA extender units followed by cyclization and release of norsolorinic acid. Norsolorinic acid is the first stable intermediate in the biosynthesis of sterigmatocystin and is converted into averantin (AVN) by the ketoreductase stcE which reduces the hexanoate ketone to an alcohol. Averantin is then oxidized into 5'-hydroxyaverantin (HAVN) by the cytochrome P450 monooxygenase stcF. 5'-hydroxyaverantin is further converted to 5'-oxyaverantin (OAVN) by the 5'-hydroxyaverantin dehydrogenase stcG. The next step is the conversion of OAVN into averufin (AVF) which is catalyzed by a yet to be identified enzyme. The cytochrome P450 monooxygenase stcB and the flavin-binding monooxygenase stcW are both required for the conversion of averufin to 1-hydroxyversicolorone. The esterase stcI probably catalyzes the formation of versiconal hemiacetal acetate from 1-hydroxyversicolorone. The oxydoreductase stcN then probably catalyzes the biosynthetic step from versiconal to versicolorin B (VERB). The next step is performed by the versicolorin B desaturase stcL to produce versicolorin A (VERA). The ketoreductase stcU and the cytochrome P450 monooxygenase stcS are involved in the conversion of versicolorin A to demethylsterigmatocystin. The Baeyer-Villiger oxidas stcQ and the reductase stcR might be involved in the biosynthetic step from versicolorin A to demethylsterigmatocystin. The final step in the biosynthesis of sterigmatocystin is the methylation of demethylsterigmatocystin catalyzed by the methyltransferase stcP. The polypeptide is Glutathione S-transferase stcT (Emericella nidulans (strain FGSC A4 / ATCC 38163 / CBS 112.46 / NRRL 194 / M139) (Aspergillus nidulans)).